The primary structure comprises 127 residues: S-adenosylmethionine decarboxylase proenzyme 2 (127 aa).

S63 functions as the Schiff-base intermediate with substrate; via pyruvic acid in the catalytic mechanism. Pyruvic acid (Ser); by autocatalysis is present on S63. The active-site Proton acceptor; for processing activity is the H68. The active-site Proton donor; for catalytic activity is C83.

Belongs to the prokaryotic AdoMetDC family. Type 1 subfamily. Heterotetramer of two alpha and two beta chains arranged as a dimer of alpha/beta heterodimers. Pyruvate is required as a cofactor. Is synthesized initially as an inactive proenzyme. Formation of the active enzyme involves a self-maturation process in which the active site pyruvoyl group is generated from an internal serine residue via an autocatalytic post-translational modification. Two non-identical subunits are generated from the proenzyme in this reaction, and the pyruvate is formed at the N-terminus of the alpha chain, which is derived from the carboxyl end of the proenzyme. The post-translation cleavage follows an unusual pathway, termed non-hydrolytic serinolysis, in which the side chain hydroxyl group of the serine supplies its oxygen atom to form the C-terminus of the beta chain, while the remainder of the serine residue undergoes an oxidative deamination to produce ammonia and the pyruvoyl group blocking the N-terminus of the alpha chain.

The catalysed reaction is S-adenosyl-L-methionine + H(+) = S-adenosyl 3-(methylsulfanyl)propylamine + CO2. Its pathway is amine and polyamine biosynthesis; S-adenosylmethioninamine biosynthesis; S-adenosylmethioninamine from S-adenosyl-L-methionine: step 1/1. Its function is as follows. Catalyzes the decarboxylation of S-adenosylmethionine to S-adenosylmethioninamine (dcAdoMet), the propylamine donor required for the synthesis of the polyamines spermine and spermidine from the diamine putrescine. The sequence is that of S-adenosylmethionine decarboxylase proenzyme 2 from Halalkalibacterium halodurans (strain ATCC BAA-125 / DSM 18197 / FERM 7344 / JCM 9153 / C-125) (Bacillus halodurans).